A 208-amino-acid chain; its full sequence is Bacitracin transport permease protein BCRB (208 aa).

6 helical membrane-spanning segments follow: residues 23–43 (LYIV…YLFN), 70–90 (VLLL…TLLF), 111–131 (FMIG…VTLL), 135–155 (YVPT…VYGT), 159–179 (ALFP…PEYP), and 182–202 (YSFI…IVYF).

The protein localises to the cell membrane. Part of the binding-protein-dependent transport system for bacitracin that confer resistance to this antibiotic; probably responsible for the translocation of the substrate across the membrane. This chain is Bacitracin transport permease protein BCRB (bcrB), found in Bacillus licheniformis.